Reading from the N-terminus, the 276-residue chain is Undecaprenyl-diphosphatase (276 aa).

The next 6 helical transmembrane spans lie at 43–63 (RAMAFNIIIQLGAILAVVWEF), 85–105 (INLLIAFLPAVVLGVIFADLI), 109–129 (LFNPITVATALVVGGLIMLWA), 184–204 (ATEFSFFLAMPTMVGAAVYSG), 218–238 (VFAIGFVTAFVFAMIAVKGLL), and 254–274 (IAFGLLILATWQFGWVDWTAA).

It belongs to the UppP family.

The protein resides in the cell inner membrane. It carries out the reaction di-trans,octa-cis-undecaprenyl diphosphate + H2O = di-trans,octa-cis-undecaprenyl phosphate + phosphate + H(+). Catalyzes the dephosphorylation of undecaprenyl diphosphate (UPP). Confers resistance to bacitracin. This chain is Undecaprenyl-diphosphatase, found in Pseudomonas fluorescens (strain ATCC BAA-477 / NRRL B-23932 / Pf-5).